Here is a 102-residue protein sequence, read N- to C-terminus: Citrate lyase acyl carrier protein (102 aa).

Residue Ser-14 is modified to O-(phosphoribosyl dephospho-coenzyme A)serine.

Belongs to the CitD family. In terms of assembly, oligomer with a subunit composition of (alpha,beta,gamma)6.

It is found in the cytoplasm. Covalent carrier of the coenzyme of citrate lyase. The polypeptide is Citrate lyase acyl carrier protein (Streptococcus equi subsp. equi (strain 4047)).